Consider the following 256-residue polypeptide: 5-keto-4-deoxy-D-glucarate aldolase (256 aa).

H50 functions as the Proton acceptor in the catalytic mechanism. Substrate is bound at residue Q151. Position 153 (E153) interacts with Mg(2+). Substrate is bound by residues S178 and D179. Mg(2+) is bound at residue D179.

This sequence belongs to the HpcH/HpaI aldolase family. KDGluc aldolase subfamily. Homohexamer; trimer of dimers. Requires Mg(2+) as cofactor.

The catalysed reaction is 5-dehydro-4-deoxy-D-glucarate = 2-hydroxy-3-oxopropanoate + pyruvate. It carries out the reaction 2-dehydro-3-deoxy-D-glucarate = 2-hydroxy-3-oxopropanoate + pyruvate. Its pathway is carbohydrate acid metabolism; galactarate degradation; D-glycerate from galactarate: step 2/3. Functionally, catalyzes the reversible retro-aldol cleavage of both 5-keto-4-deoxy-D-glucarate and 2-keto-3-deoxy-D-glucarate to pyruvate and tartronic semialdehyde. This chain is 5-keto-4-deoxy-D-glucarate aldolase, found in Salmonella paratyphi C (strain RKS4594).